The chain runs to 486 residues: NADH-quinone oxidoreductase subunit N (486 aa).

Transmembrane regions (helical) follow at residues 11–31 (ALPE…DLFV), 44–64 (MLAL…YPVL), 74–94 (PIAS…MIYA), 103–123 (FLKG…CVMV), 128–148 (MLTL…LIAL), 163–183 (FVLG…VYGG), 206–226 (VSLG…AVPF), 238–258 (PTAV…VFVI), 267–287 (PAAV…LVVG), 300–320 (MLAY…LAAT), 328–348 (MFYA…LLAL), 371–391 (YALL…LVGF), 404–424 (VGLT…AFYY), and 452–472 (LVLG…NGLY).

Belongs to the complex I subunit 2 family. As to quaternary structure, NDH-1 is composed of 14 different subunits. Subunits NuoA, H, J, K, L, M, N constitute the membrane sector of the complex.

The protein localises to the cell inner membrane. It catalyses the reaction a quinone + NADH + 5 H(+)(in) = a quinol + NAD(+) + 4 H(+)(out). Functionally, NDH-1 shuttles electrons from NADH, via FMN and iron-sulfur (Fe-S) centers, to quinones in the respiratory chain. The immediate electron acceptor for the enzyme in this species is believed to be ubiquinone. Couples the redox reaction to proton translocation (for every two electrons transferred, four hydrogen ions are translocated across the cytoplasmic membrane), and thus conserves the redox energy in a proton gradient. This Laribacter hongkongensis (strain HLHK9) protein is NADH-quinone oxidoreductase subunit N.